Here is a 677-residue protein sequence, read N- to C-terminus: Secretogranin-1 (677 aa).

Positions 1 to 20 are cleaved as a signal peptide; that stretch reads MQPTLLLSLLGAVGLAAVNS. An intrachain disulfide couples Cys36 to Cys57. Composition is skewed to basic and acidic residues over residues 64–100 and 118–136; these read SRKD…ESSS and ADTE…RADE. The tract at residues 64–463 is disordered; sequence SRKDVKDKET…DKARRHPQGA (400 aa). Position 79 is a phosphothreonine (Thr79). Phosphoserine is present on residues Ser93, Ser99, and Ser100. Residue Ser93 is glycosylated (O-linked (Xyl...) (chondroitin sulfate) serine). The interval 116-120 is O-glycosylated at one site; that stretch reads TKADT. Residue Ser130 is modified to Phosphoserine; by FAM20C. Ser149 carries the phosphoserine modification. Composition is skewed to basic and acidic residues over residues 150-162, 172-190, and 200-236; these read EEVK…KSQR, NYQK…HLEE, and NERK…EKSS. Ser183 carries the post-translational modification Phosphoserine. Ser225 bears the Phosphoserine; by FAM20C mark. The O-linked (Xyl...) (chondroitin sulfate) serine glycan is linked to Ser239. Phosphoserine occurs at positions 259 and 263. A compositionally biased stretch (acidic residues) spans 262–272; the sequence is ESEEGEEDATS. The segment covering 277 to 287 has biased composition (basic residues); that stretch reads RRTRPRHHHGR. Phosphoserine occurs at positions 293, 294, 311, and 335. Position 341 is a sulfotyrosine (Tyr341). The span at 359–372 shows a compositional bias: basic and acidic residues; the sequence is WERYRGRGSEEYRA. Residues Ser367, Ser377, and Ser380 each carry the phosphoserine; by FAM20C modification. Basic and acidic residues-rich tracts occupy residues 384-415 and 433-455; these read EDKR…EPGK and DTRE…QMDK. A Phosphotyrosine modification is found at Tyr401. Ser405 is subject to Phosphoserine. The residue at position 474 (Tyr474) is a Sulfotyrosine. The interval 475–512 is disordered; that stretch reads GEEGAPGKWQQQGDLQDTKENREEARFQDKQYSSHHTA. Residues 490-503 are compositionally biased toward basic and acidic residues; that stretch reads QDTKENREEARFQD. A phosphoserine mark is found at Ser533 and Ser534. At Tyr566 the chain carries Sulfotyrosine. Ser617 carries the phosphoserine modification. The tract at residues 622–653 is disordered; the sequence is DFYDSEEPVSTHQEAENEKDRADQTVLTEDEK. The residue at position 624 (Tyr624) is a Sulfotyrosine. Phosphoserine is present on residues Ser626 and Ser631. The span at 634-653 shows a compositional bias: basic and acidic residues; the sequence is QEAENEKDRADQTVLTEDEK.

Belongs to the chromogranin/secretogranin protein family. In terms of assembly, interacts with ITPR1 in the secretory granules. In terms of processing, extensively processed by limited proteolysis at conserved basic residues. Alternative processing are seen in different tissues. O-glycosylated. In terms of tissue distribution, detected in cerebrospinal fluid and urine (at protein level). Expressed in the adrenal medulla, and in pheochromocytoma. Not expressed in liver.

The protein localises to the secreted. Functionally, secretogranin-1 is a neuroendocrine secretory granule protein, which may be the precursor for other biologically active peptides. This chain is Secretogranin-1 (CHGB), found in Homo sapiens (Human).